The chain runs to 387 residues: MTVLKMTDLDLQGKRVLIREDLNVPVKDGVVSSDARILASLPTIRLALEKGAAVMVCSHLGRPTEGEFSAENSLKPVADYLSKALGRDVPLVADYLDGVDVKAGDVVLFENVRFNKGEKKNADELAQKYAALCDVFVMDAFGTAHRAEGSTHGVAKFAKVAAAGPLLAAELEALGKALGAPAQPMTAIVAGSKVSTKLDVLNSLSGICNQLIVGGGIANTFLAAAGHKVGKSLYEPDLLDTARAIAAKVSVPLPTDVVVAKEFAESATATVKLIADVADDDMILDIGPQTAAHFAELLKSSGTILWNGPVGVFEFDQFGEGTKTLAKAIGESQAFSIAGGGDTLAAIDKYGVAEQISYISTGGGAFLEFVEGKVLPAVEVLEQRAKA.

Residues 21–23 (DLN), R36, 59–62 (HLGR), R113, and R146 contribute to the substrate site. Residues K197, E314, and 340–343 (GGDT) each bind ATP.

Belongs to the phosphoglycerate kinase family. Monomer.

It localises to the cytoplasm. The catalysed reaction is (2R)-3-phosphoglycerate + ATP = (2R)-3-phospho-glyceroyl phosphate + ADP. It functions in the pathway carbohydrate degradation; glycolysis; pyruvate from D-glyceraldehyde 3-phosphate: step 2/5. The polypeptide is Phosphoglycerate kinase (Pseudomonas savastanoi pv. phaseolicola (strain 1448A / Race 6) (Pseudomonas syringae pv. phaseolicola (strain 1448A / Race 6))).